Here is a 353-residue protein sequence, read N- to C-terminus: GTPase Obg (353 aa).

Residues 1-159 (MRFVDEVVIN…RVIRLELKLL (159 aa)) form the Obg domain. The OBG-type G domain occupies 160–334 (ADVGLLGMPN…LCTAIMQELT (175 aa)). GTP-binding positions include 166-173 (GMPNAGKS), 191-195 (FTTLH), 213-216 (DIPG), 284-287 (NKMD), and 315-317 (SAA). Ser173 and Thr193 together coordinate Mg(2+).

Belongs to the TRAFAC class OBG-HflX-like GTPase superfamily. OBG GTPase family. In terms of assembly, monomer. The cofactor is Mg(2+).

It is found in the cytoplasm. Its function is as follows. An essential GTPase which binds GTP, GDP and possibly (p)ppGpp with moderate affinity, with high nucleotide exchange rates and a fairly low GTP hydrolysis rate. Plays a role in control of the cell cycle, stress response, ribosome biogenesis and in those bacteria that undergo differentiation, in morphogenesis control. This is GTPase Obg from Dichelobacter nodosus (strain VCS1703A).